The sequence spans 1120 residues: ELKS/Rab6-interacting/CAST family member 1 (1120 aa).

The segment at 1-54 (MYGSARSVGKVEPSSQSPGRSPRLPRSPRLGHRRTNSTGGSSGNSVGGGSGKTL) is disordered. Position 10 is an N6-acetyllysine (lysine 10). Residues 13–28 (PSSQSPGRSPRLPRSP) show a composition bias toward low complexity. Serine 17, serine 21, and serine 37 each carry phosphoserine. At threonine 38 the chain carries Phosphothreonine. Residues 40 to 51 (GSSGNSVGGGSG) are compositionally biased toward gly residues. A phosphoserine mark is found at serine 55, serine 75, serine 94, serine 824, leucine 965, and serine 1009. Residues 144–992 (RQARDNTIMD…RMKLMADNYE (849 aa)) adopt a coiled-coil conformation. Residues 801–824 (KHKEQVEKKKSAQMLEEARRREDS) show a composition bias toward basic and acidic residues. A disordered region spans residues 801–840 (KHKEQVEKKKSAQMLEEARRREDSLSDSSQQLQDSLRKKD). Threonine 1050 carries the post-translational modification Phosphothreonine. The region spanning 1050 to 1112 (TPPASYNADG…DHCPDILEQV (63 aa)) is the FIP-RBD domain. Positions 1060–1104 (EQAAWENELQQMTQEQLQNELEKVEGDNAELQEFANTILQQIADH) form a coiled coil.

Interacts with the GTB-bound forms of RAB6A isoform 1 and isoform 2 and with RAB6B. The interaction was strongest with RAB6B, followed by RAB6A isoform 2 and weakest with RAB6A isoform 1. Part of a complex with CHUK, IKBKB and IKBKG. Interacts with CHUK, IKBKB and IKBKG. The interaction with IKBKG is independent of CHUK and IKBKB. Interacts with NFKBIA. Isoform 2 interacts through its C-terminus with the PDZ domains of RIMS1 and RIMS2. Interacts with ERC2/CAST1. Interacts with SDCCAG8. Part of a cortical microtubule stabilization complex (CMSC) composed of KANK1, PPFIA1, PPFIBP1, ERC1/ELKS, PHLDB2/LL5beta, CLASPs, KIF21A and possibly additional interactors; within CMSCs KANK1 and PHLDB2/LL5beta appear to be the core components for targeting of microtubule-binding proteins KIF21A and CLASPs, whereas PPFIA1, PPFIBP1 and ERC1/ELKS serve as scaffolds for protein clustering. Widely expressed.

Its subcellular location is the cytoplasm. It localises to the cytoskeleton. The protein localises to the microtubule organizing center. It is found in the centrosome. The protein resides in the membrane. Its subcellular location is the golgi apparatus membrane. It localises to the presynaptic active zone. The protein localises to the cell projection. It is found in the podosome. Regulatory subunit of the IKK complex. Probably recruits IkappaBalpha/NFKBIA to the complex. May be involved in the organization of the cytomatrix at the nerve terminals active zone (CAZ) which regulates neurotransmitter release. May be involved in vesicle trafficking at the CAZ. May be involved in Rab-6 regulated endosomes to Golgi transport. The polypeptide is ELKS/Rab6-interacting/CAST family member 1 (Mus musculus (Mouse)).